We begin with the raw amino-acid sequence, 142 residues long: SLSDKDKAAVRALWSKIGKSADAIGNDALSRMIVVYPQTKTYFSHWPDVTPGSAHIKAHGKKVMGGIALAVSKIDDLKAGLSDLSEQHAYKLRVDPANFKILNHCILVVISTMFPKDFTPEAHVSLDKFLSGVALALAERYR.

S1 is modified (N-acetylserine). In terms of domain architecture, Globin spans 1 to 142 (SLSDKDKAAV…VALALAERYR (142 aa)). H59 contributes to the O2 binding site. H88 is a heme b binding site.

The protein belongs to the globin family. In terms of assembly, hb1 is a heterotetramer of two alpha-2 chains and two beta chains, while Hb2 is a heterotetramer of two alpha-2 chains and two beta chains. As to expression, red blood cells.

In terms of biological role, involved in oxygen transport from gills to the various peripheral tissues. This is Hemoglobin subunit alpha-1 (hba1) from Notothenia angustata (Rockcod).